Consider the following 115-residue polypeptide: Transmembrane protein 218 (115 aa).

3 helical membrane-spanning segments follow: residues 5 to 25 (VLGV…VLLL), 38 to 58 (FSVI…LLFP), and 81 to 101 (YVLL…VLIH).

It belongs to the TMEM218 family. In terms of assembly, interacts with TMEM67.

Its subcellular location is the membrane. The protein resides in the cell projection. It is found in the cilium. Functionally, may be involved in ciliary biogenesis or function. In Homo sapiens (Human), this protein is Transmembrane protein 218 (TMEM218).